The sequence spans 153 residues: Putative trans-acting regulator pXO2-62/BXB0076/GBAA_pXO2_0076 (153 aa).

Belongs to the AtxA/AcpA family.

This Bacillus anthracis protein is Putative trans-acting regulator pXO2-62/BXB0076/GBAA_pXO2_0076.